We begin with the raw amino-acid sequence, 428 residues long: Phosphomethylpyrimidine synthase 2 (428 aa).

Substrate contacts are provided by residues M94, Y123, H162, 184-186, 225-228, and E264; these read SRG and NGMR. A Zn(2+)-binding site is contributed by H268. Y291 is a substrate binding site. Residue H332 coordinates Zn(2+). [4Fe-4S] cluster-binding residues include C408, C411, and C415.

The protein belongs to the ThiC family. [4Fe-4S] cluster serves as cofactor.

It catalyses the reaction 5-amino-1-(5-phospho-beta-D-ribosyl)imidazole + S-adenosyl-L-methionine = 4-amino-2-methyl-5-(phosphooxymethyl)pyrimidine + CO + 5'-deoxyadenosine + formate + L-methionine + 3 H(+). The protein operates within cofactor biosynthesis; thiamine diphosphate biosynthesis. Its function is as follows. Catalyzes the synthesis of the hydroxymethylpyrimidine phosphate (HMP-P) moiety of thiamine from aminoimidazole ribotide (AIR) in a radical S-adenosyl-L-methionine (SAM)-dependent reaction. The polypeptide is Phosphomethylpyrimidine synthase 2 (Methanosarcina mazei (strain ATCC BAA-159 / DSM 3647 / Goe1 / Go1 / JCM 11833 / OCM 88) (Methanosarcina frisia)).